The chain runs to 274 residues: Phosphatidylglycerol--prolipoprotein diacylglyceryl transferase (274 aa).

A run of 4 helical transmembrane segments spans residues 19 to 39, 59 to 79, 93 to 113, and 120 to 140; these read VGSV…VLGL, LAIW…VLFQ, IWRG…AALI, and VSFW…QAIG. Position 141 (arginine 141) interacts with a 1,2-diacyl-sn-glycero-3-phospho-(1'-sn-glycerol). Helical transmembrane passes span 181–201, 209–229, and 243–263; these read TFLY…ALFF, GTIF…IEGL, and QVVS…LYLL.

The protein belongs to the Lgt family.

Its subcellular location is the cell inner membrane. The enzyme catalyses L-cysteinyl-[prolipoprotein] + a 1,2-diacyl-sn-glycero-3-phospho-(1'-sn-glycerol) = an S-1,2-diacyl-sn-glyceryl-L-cysteinyl-[prolipoprotein] + sn-glycerol 1-phosphate + H(+). The protein operates within protein modification; lipoprotein biosynthesis (diacylglyceryl transfer). Its function is as follows. Catalyzes the transfer of the diacylglyceryl group from phosphatidylglycerol to the sulfhydryl group of the N-terminal cysteine of a prolipoprotein, the first step in the formation of mature lipoproteins. The polypeptide is Phosphatidylglycerol--prolipoprotein diacylglyceryl transferase (Acaryochloris marina (strain MBIC 11017)).